Reading from the N-terminus, the 190-residue chain is Tereporin-Ca1 (190 aa).

The segment at 2-21 is N-terminal region; it reads TAGSSLAGTTLSGLAASGYR. Residues Gly-78, Ser-96, Pro-98, Tyr-131, and Tyr-132 each coordinate phosphocholine. Positions 138–140 match the Cell attachment site, crucial for protein stability motif; that stretch reads KGE.

Belongs to the actinoporin family. Conoidea subfamily. Octamer or nonamer in membranes. Monomer in the soluble state. As to expression, expressed by the venom duct.

The protein resides in the secreted. It localises to the nematocyst. The protein localises to the target cell membrane. Functionally, pore-forming protein that forms pores of around 1 nm and causes cardiac stimulation and cytolysis. The polypeptide is Tereporin-Ca1 (Terebra anilis (Auger snail)).